Consider the following 201-residue polypeptide: Large ribosomal subunit protein uL4 (201 aa).

A disordered region spans residues 44–71; that stretch reads RAQKTRAEVSGSGKKPWRQKGTGRARSG.

This sequence belongs to the universal ribosomal protein uL4 family. As to quaternary structure, part of the 50S ribosomal subunit.

In terms of biological role, one of the primary rRNA binding proteins, this protein initially binds near the 5'-end of the 23S rRNA. It is important during the early stages of 50S assembly. It makes multiple contacts with different domains of the 23S rRNA in the assembled 50S subunit and ribosome. Forms part of the polypeptide exit tunnel. The chain is Large ribosomal subunit protein uL4 from Actinobacillus succinogenes (strain ATCC 55618 / DSM 22257 / CCUG 43843 / 130Z).